The sequence spans 537 residues: Atrial natriuretic peptide receptor 3 (537 aa).

The first 20 residues, 1 to 20, serve as a signal peptide directing secretion; the sequence is MPSLLVLTFSACVLLGWALL. A propeptide spanning residues 21-41 is cleaved from the precursor; it reads ADCTGGGGSGGAGPGRGRRER. At 42–477 the chain is on the extracellular side; the sequence is EALPPQKIEV…PCKASGGLEE (436 aa). An N-linked (GlcNAc...) asparagine glycan is attached at N82. 2 disulfide bridges follow: C104-C132 and C209-C257. 2 N-linked (GlcNAc...) asparagine glycosylation sites follow: N289 and N390. A helical transmembrane segment spans residues 478–500; that stretch reads SAVTGIVVGALLGAGLLMAFYFF. Residues 501–537 lie on the Cytoplasmic side of the membrane; that stretch reads RKKYRITIERRNQQEESNVGKHRELREDSIRSHFSVA.

This sequence belongs to the ANF receptor family. Homodimer; disulfide-linked. Interacts with OSTN.

It is found in the cell membrane. Functionally, receptor for the natriuretic peptide hormones, binding with similar affinities atrial natriuretic peptide NPPA/ANP, brain natriuretic peptide NPPB/BNP, and C-type natriuretic peptide NPPC/CNP. May function as a clearance receptor for NPPA, NPPB and NPPC, regulating their local concentrations and effects. Acts as a regulator of osteoblast differentiation and bone growth by binding to its ligand osteocrin, thereby preventing binding between NPR3/NPR-C and natriuretic peptides, leading to increase cGMP production. This chain is Atrial natriuretic peptide receptor 3 (NPR3), found in Bos taurus (Bovine).